The sequence spans 93 residues: Pyrimidine/purine nucleoside phosphorylase (93 aa).

The protein belongs to the nucleoside phosphorylase PpnP family.

The catalysed reaction is a purine D-ribonucleoside + phosphate = a purine nucleobase + alpha-D-ribose 1-phosphate. The enzyme catalyses adenosine + phosphate = alpha-D-ribose 1-phosphate + adenine. It carries out the reaction cytidine + phosphate = cytosine + alpha-D-ribose 1-phosphate. It catalyses the reaction guanosine + phosphate = alpha-D-ribose 1-phosphate + guanine. The catalysed reaction is inosine + phosphate = alpha-D-ribose 1-phosphate + hypoxanthine. The enzyme catalyses thymidine + phosphate = 2-deoxy-alpha-D-ribose 1-phosphate + thymine. It carries out the reaction uridine + phosphate = alpha-D-ribose 1-phosphate + uracil. It catalyses the reaction xanthosine + phosphate = alpha-D-ribose 1-phosphate + xanthine. Functionally, catalyzes the phosphorolysis of diverse nucleosides, yielding D-ribose 1-phosphate and the respective free bases. Can use uridine, adenosine, guanosine, cytidine, thymidine, inosine and xanthosine as substrates. Also catalyzes the reverse reactions. This chain is Pyrimidine/purine nucleoside phosphorylase, found in Marinobacter nauticus (strain ATCC 700491 / DSM 11845 / VT8) (Marinobacter aquaeolei).